A 396-amino-acid chain; its full sequence is Elongation factor Tu (396 aa).

Positions 10–206 (KPHVNVGTIG…AMDEYIPTPE (197 aa)) constitute a tr-type G domain. Residues 19–26 (GHVDHGKT) form a G1 region. 19-26 (GHVDHGKT) serves as a coordination point for GTP. A Mg(2+)-binding site is contributed by threonine 26. Residues 60–64 (GITIA) form a G2 region. A G3 region spans residues 81–84 (DCPG). GTP contacts are provided by residues 81-85 (DCPGH) and 136-139 (NKAD). Positions 136-139 (NKAD) are G4. A G5 region spans residues 174–176 (SAL).

It belongs to the TRAFAC class translation factor GTPase superfamily. Classic translation factor GTPase family. EF-Tu/EF-1A subfamily. As to quaternary structure, monomer.

The protein resides in the cytoplasm. It carries out the reaction GTP + H2O = GDP + phosphate + H(+). Its function is as follows. GTP hydrolase that promotes the GTP-dependent binding of aminoacyl-tRNA to the A-site of ribosomes during protein biosynthesis. This Alkalilimnicola ehrlichii (strain ATCC BAA-1101 / DSM 17681 / MLHE-1) protein is Elongation factor Tu.